The following is a 183-amino-acid chain: Phosphopantetheine adenylyltransferase (183 aa).

A substrate-binding site is contributed by Ser8. Residues 8-9 (SF) and His16 each bind ATP. Lys40, Thr72, and Arg86 together coordinate substrate. ATP contacts are provided by residues 87–89 (GLR), Glu97, and 122–128 (YSFLSSS).

This sequence belongs to the bacterial CoaD family. As to quaternary structure, homohexamer. Mg(2+) serves as cofactor.

It is found in the cytoplasm. The enzyme catalyses (R)-4'-phosphopantetheine + ATP + H(+) = 3'-dephospho-CoA + diphosphate. Its pathway is cofactor biosynthesis; coenzyme A biosynthesis; CoA from (R)-pantothenate: step 4/5. Functionally, reversibly transfers an adenylyl group from ATP to 4'-phosphopantetheine, yielding dephospho-CoA (dPCoA) and pyrophosphate. The protein is Phosphopantetheine adenylyltransferase of Nostoc punctiforme (strain ATCC 29133 / PCC 73102).